The sequence spans 367 residues: Epoxide hydrolase 3 (367 aa).

A helical membrane pass occupies residues 21 to 41; that stretch reads GVFFWVLVYVAALLAAVSYIP. The Nucleophile role is filled by Asp-173. Residue Tyr-285 is the Proton donor of the active site. His-340 serves as the catalytic Proton acceptor.

This sequence belongs to the AB hydrolase superfamily. Epoxide hydrolase family.

It is found in the microsome membrane. It carries out the reaction an epoxide + H2O = an ethanediol. The catalysed reaction is 9,10-epoxyoctadecanoate + H2O = 9,10-dihydroxyoctadecanoate. The enzyme catalyses 9,10-epoxy-(12Z)-octadecenoate + H2O = 9,10-dihydroxy-(12Z)-octadecenoate. It catalyses the reaction 8,9-epoxy-(5Z,11Z,14Z)-eicosatrienoate + H2O = 8,9-dihydroxy-(5Z,11Z,14Z)-eicosatrienoate. It carries out the reaction 11,12-epoxy-(5Z,8Z,14Z)-eicosatrienoate + H2O = 11,12-dihydroxy-(5Z,8Z,14Z)-eicosatrienoate. The catalysed reaction is 14,15-epoxy-(5Z,8Z,11Z)-eicosatrienoate + H2O = 14,15-dihydroxy-(5Z,8Z,11Z)-eicosatrienoate. Inhibited by 1-(1-acetylpiperidin-4-yl)-3-(4-(trifl uoromethoxy)phenyl)urea (TPAU), 1-cyclohexyl-3-dodecylurea (CDU), 12-(3-adamantan-1-yl-ureido)-dodecanoic acid (AUDA), 1-((3S, 5S, 7S)-adamantan-1-yl)-3-(5-(2-(2-ethoxyethoxy) ethoxy)pentyl)urea (AEPU) and to a lesser extent by 8-(3-((3S, 5S, 7S)-adamantan-1-yl)ureido) octanoic acid (AUOA). Functionally, catalyzes the hydrolysis of epoxide-containing fatty acids. Active in vitro against epoxyeicosatrienoic acids (EETs) including 8,9-EET, 9,10-EET, 11,12-EET and 14,15-EET and leukotoxin. In Xenopus tropicalis (Western clawed frog), this protein is Epoxide hydrolase 3 (ephx3).